The following is a 246-amino-acid chain: 23S rRNA (guanosine-2'-O-)-methyltransferase RlmB (246 aa).

The S-adenosyl-L-methionine site is built by Gly-198, Ile-218, and Leu-227.

It belongs to the class IV-like SAM-binding methyltransferase superfamily. RNA methyltransferase TrmH family. RlmB subfamily.

It is found in the cytoplasm. The enzyme catalyses guanosine(2251) in 23S rRNA + S-adenosyl-L-methionine = 2'-O-methylguanosine(2251) in 23S rRNA + S-adenosyl-L-homocysteine + H(+). Functionally, specifically methylates the ribose of guanosine 2251 in 23S rRNA. The polypeptide is 23S rRNA (guanosine-2'-O-)-methyltransferase RlmB (Shewanella oneidensis (strain ATCC 700550 / JCM 31522 / CIP 106686 / LMG 19005 / NCIMB 14063 / MR-1)).